An 827-amino-acid polypeptide reads, in one-letter code: DNA ligase (827 aa).

Residues 45 to 49, 94 to 95, and Glu128 contribute to the NAD(+) site; these read DAAYD and SL. Lys130 (N6-AMP-lysine intermediate) is an active-site residue. Arg151, Glu188, Lys304, and Lys328 together coordinate NAD(+). Zn(2+) is bound by residues Cys451, Cys454, Cys475, and Cys481. The BRCT domain occupies 748–827; sequence AAAAAFSGRT…AEWLAMVEAA (80 aa).

The protein belongs to the NAD-dependent DNA ligase family. LigA subfamily. The cofactor is Mg(2+). Mn(2+) serves as cofactor.

The catalysed reaction is NAD(+) + (deoxyribonucleotide)n-3'-hydroxyl + 5'-phospho-(deoxyribonucleotide)m = (deoxyribonucleotide)n+m + AMP + beta-nicotinamide D-nucleotide.. Functionally, DNA ligase that catalyzes the formation of phosphodiester linkages between 5'-phosphoryl and 3'-hydroxyl groups in double-stranded DNA using NAD as a coenzyme and as the energy source for the reaction. It is essential for DNA replication and repair of damaged DNA. This Methylobacterium sp. (strain 4-46) protein is DNA ligase.